A 261-amino-acid polypeptide reads, in one-letter code: MTHQTHAYHMVNPSPWPLTGALSALLMTSGLIMWFHFNSTTLLMLGLTTNMLTMYQWWRDVIRESTFQGHHTPNVQKGLRYGMILFIISEVLFFTGFFWAFYHSSLAPTPELGGCWPPTGIHPLNPLEVPLLNTSVLLASGVSITWAHHSLMEGNRNHMLQALFITIALGVYFTLLQASEYYEAPFTISDGVYGSTFFVATGFHGLHVIIGSTFLIVCFFRQLKFHFTSNHHFGFEAAAWYWHFVDVVWLFLYVSIYWWGS.

At 1–15 (MTHQTHAYHMVNPSP) the chain is on the mitochondrial matrix side. A helical membrane pass occupies residues 16-34 (WPLTGALSALLMTSGLIMW). Over 35–40 (FHFNST) the chain is Mitochondrial intermembrane. Residues 41–66 (TLLMLGLTTNMLTMYQWWRDVIREST) form a helical membrane-spanning segment. Topologically, residues 67 to 72 (FQGHHT) are mitochondrial matrix. The helical transmembrane segment at 73–105 (PNVQKGLRYGMILFIISEVLFFTGFFWAFYHSS) threads the bilayer. At 106–128 (LAPTPELGGCWPPTGIHPLNPLE) the chain is on the mitochondrial intermembrane side. Residues 129 to 152 (VPLLNTSVLLASGVSITWAHHSLM) form a helical membrane-spanning segment. The Mitochondrial matrix segment spans residues 153–155 (EGN). A helical membrane pass occupies residues 156-183 (RNHMLQALFITIALGVYFTLLQASEYYE). The Mitochondrial intermembrane segment spans residues 184–190 (APFTISD). Residues 191–223 (GVYGSTFFVATGFHGLHVIIGSTFLIVCFFRQL) form a helical membrane-spanning segment. Residues 224 to 232 (KFHFTSNHH) lie on the Mitochondrial matrix side of the membrane. A helical membrane pass occupies residues 233–256 (FGFEAAAWYWHFVDVVWLFLYVSI). The Mitochondrial intermembrane portion of the chain corresponds to 257–261 (YWWGS).

It belongs to the cytochrome c oxidase subunit 3 family. As to quaternary structure, component of the cytochrome c oxidase (complex IV, CIV), a multisubunit enzyme composed of 14 subunits. The complex is composed of a catalytic core of 3 subunits MT-CO1, MT-CO2 and MT-CO3, encoded in the mitochondrial DNA, and 11 supernumerary subunits COX4I, COX5A, COX5B, COX6A, COX6B, COX6C, COX7A, COX7B, COX7C, COX8 and NDUFA4, which are encoded in the nuclear genome. The complex exists as a monomer or a dimer and forms supercomplexes (SCs) in the inner mitochondrial membrane with NADH-ubiquinone oxidoreductase (complex I, CI) and ubiquinol-cytochrome c oxidoreductase (cytochrome b-c1 complex, complex III, CIII), resulting in different assemblies (supercomplex SCI(1)III(2)IV(1) and megacomplex MCI(2)III(2)IV(2)).

Its subcellular location is the mitochondrion inner membrane. It carries out the reaction 4 Fe(II)-[cytochrome c] + O2 + 8 H(+)(in) = 4 Fe(III)-[cytochrome c] + 2 H2O + 4 H(+)(out). In terms of biological role, component of the cytochrome c oxidase, the last enzyme in the mitochondrial electron transport chain which drives oxidative phosphorylation. The respiratory chain contains 3 multisubunit complexes succinate dehydrogenase (complex II, CII), ubiquinol-cytochrome c oxidoreductase (cytochrome b-c1 complex, complex III, CIII) and cytochrome c oxidase (complex IV, CIV), that cooperate to transfer electrons derived from NADH and succinate to molecular oxygen, creating an electrochemical gradient over the inner membrane that drives transmembrane transport and the ATP synthase. Cytochrome c oxidase is the component of the respiratory chain that catalyzes the reduction of oxygen to water. Electrons originating from reduced cytochrome c in the intermembrane space (IMS) are transferred via the dinuclear copper A center (CU(A)) of subunit 2 and heme A of subunit 1 to the active site in subunit 1, a binuclear center (BNC) formed by heme A3 and copper B (CU(B)). The BNC reduces molecular oxygen to 2 water molecules using 4 electrons from cytochrome c in the IMS and 4 protons from the mitochondrial matrix. The sequence is that of Cytochrome c oxidase subunit 3 (MT-CO3) from Antilope cervicapra (Blackbuck).